The primary structure comprises 247 residues: NCT transcriptional regulatory complex subunit A (247 aa).

Residues methionine 1 to serine 12 show a composition bias toward basic and acidic residues. Disordered regions lie at residues methionine 1–tyrosine 31, phenylalanine 48–methionine 82, and valine 212–aspartate 247. The span at proline 13–isoleucine 22 shows a compositional bias: polar residues.

It belongs to the NC2 alpha/DRAP1 family. As to quaternary structure, forms the NCT transcriptional regulatory complex with nctB and mot1.

It localises to the nucleus. In terms of biological role, part of the NCT transcriptional regulatory complex that acts as a key regulator of ergosterol biosynthesis and the azole exporter cdr1B. The NCT complex binds the promoters of genes linked to azole susceptibility, and especially represses the expression of cdr1B transporter. This chain is NCT transcriptional regulatory complex subunit A, found in Aspergillus fumigatus (strain CBS 144.89 / FGSC A1163 / CEA10) (Neosartorya fumigata).